Reading from the N-terminus, the 234-residue chain is 2-C-methyl-D-erythritol 4-phosphate cytidylyltransferase (234 aa).

Belongs to the IspD/TarI cytidylyltransferase family. IspD subfamily.

The catalysed reaction is 2-C-methyl-D-erythritol 4-phosphate + CTP + H(+) = 4-CDP-2-C-methyl-D-erythritol + diphosphate. It participates in isoprenoid biosynthesis; isopentenyl diphosphate biosynthesis via DXP pathway; isopentenyl diphosphate from 1-deoxy-D-xylulose 5-phosphate: step 2/6. Catalyzes the formation of 4-diphosphocytidyl-2-C-methyl-D-erythritol from CTP and 2-C-methyl-D-erythritol 4-phosphate (MEP). This Pseudomonas paraeruginosa (strain DSM 24068 / PA7) (Pseudomonas aeruginosa (strain PA7)) protein is 2-C-methyl-D-erythritol 4-phosphate cytidylyltransferase.